Here is a 129-residue protein sequence, read N- to C-terminus: Glycine cleavage system H protein (129 aa).

The region spanning 23 to 104 (SVTVGITQHA…CYAAWLFKLK (82 aa)) is the Lipoyl-binding domain. Lys-64 carries the N6-lipoyllysine modification.

It belongs to the GcvH family. As to quaternary structure, the glycine cleavage system is composed of four proteins: P, T, L and H. (R)-lipoate is required as a cofactor.

In terms of biological role, the glycine cleavage system catalyzes the degradation of glycine. The H protein shuttles the methylamine group of glycine from the P protein to the T protein. The polypeptide is Glycine cleavage system H protein (Nitrosomonas europaea (strain ATCC 19718 / CIP 103999 / KCTC 2705 / NBRC 14298)).